Here is a 65-residue protein sequence, read N- to C-terminus: Large ribosomal subunit protein bL33 (65 aa).

A disordered region spans residues 17–40 (SRSVPSSEKRSAGVSRYTTEKNRR).

It belongs to the bacterial ribosomal protein bL33 family.

This Prochlorococcus marinus (strain NATL1A) protein is Large ribosomal subunit protein bL33.